Reading from the N-terminus, the 187-residue chain is MKLERILPFSKTLIKQHITPESIVVDATCGNGNDTLFLAEQVPEGHVYGFDIQDLALENTRDKVKDFNHVSLIKDGHENIEHHINDAHKGHIDAAIFNLGYLPKGDKSIVTKPDTTIQAINSLLSLMSIEGIIVLVIYHGHSEGQIEKHALLDYLSTLDQKHAQVLQYQFLNQRNHAPFICAIEKIS.

Residues Asn31, Asn33, Asp51, Gln53, His77, and Glu78 each coordinate S-adenosyl-L-methionine.

Belongs to the methyltransferase superfamily. MnmM family. In terms of assembly, homodimer.

The catalysed reaction is 5-aminomethyl-2-thiouridine(34) in tRNA + S-adenosyl-L-methionine = 5-methylaminomethyl-2-thiouridine(34) in tRNA + S-adenosyl-L-homocysteine + H(+). Its pathway is tRNA modification. Functionally, involved in the biosynthesis of 5-methylaminomethyl-2-thiouridine (mnm(5)s(2)U) at the wobble position (U34) in tRNA. Catalyzes the transfer of a methyl group from S-adenosyl-L-methionine to nm(5)s(2)U34 to form mnm(5)s(2)U34. The protein is tRNA (mnm(5)s(2)U34)-methyltransferase of Staphylococcus aureus (strain NCTC 8325 / PS 47).